The following is a 188-amino-acid chain: D-glycero-beta-D-manno-heptose-1,7-bisphosphate 7-phosphatase (188 aa).

Catalysis depends on aspartate 11, which acts as the Nucleophile. Mg(2+)-binding residues include aspartate 11 and aspartate 13. Substrate-binding positions include aspartate 11–aspartate 13, aspartate 19–tyrosine 22, and threonine 53–serine 56. The active-site Proton donor is the aspartate 13. Residues cysteine 92, histidine 94, cysteine 107, and cysteine 109 each coordinate Zn(2+). Arginine 110–lysine 111 serves as a coordination point for substrate. Mg(2+)-binding residues include aspartate 136 and lysine 137. Position 137 (lysine 137) interacts with substrate.

The protein belongs to the GmhB family. As to quaternary structure, monomer. Mg(2+) is required as a cofactor. Requires Zn(2+) as cofactor.

It is found in the cytoplasm. It carries out the reaction D-glycero-beta-D-manno-heptose 1,7-bisphosphate + H2O = D-glycero-beta-D-manno-heptose 1-phosphate + phosphate. It functions in the pathway nucleotide-sugar biosynthesis; ADP-L-glycero-beta-D-manno-heptose biosynthesis; ADP-L-glycero-beta-D-manno-heptose from D-glycero-beta-D-manno-heptose 7-phosphate: step 2/4. Its pathway is bacterial outer membrane biogenesis; LPS core biosynthesis. Converts the D-glycero-beta-D-manno-heptose 1,7-bisphosphate intermediate into D-glycero-beta-D-manno-heptose 1-phosphate by removing the phosphate group at the C-7 position. The sequence is that of D-glycero-beta-D-manno-heptose-1,7-bisphosphate 7-phosphatase (gmhB) from Yersinia pestis.